Reading from the N-terminus, the 253-residue chain is Homeotic protein ultrabithorax (253 aa).

Low complexity predominate over residues Gly-125–Asn-141. A disordered region spans residues Gly-125–Gln-193. Positions Arg-176 to Gly-189 are enriched in gly residues. An Antp-type hexapeptide motif is present at residues Phe-237–Ala-242.

Belongs to the Antp homeobox family.

It is found in the nucleus. Its function is as follows. Sequence-specific transcription factor which is part of a developmental regulatory system that provides cells with specific positional identities on the anterior-posterior axis. Binds the consensus region 5'-TTAAT[GT][GA]-3'. This homeotic protein controls development of the cells in the posterior thoracic and first abdominal segments. It activates the synthesis of the decapentaplegic (DPP) growth factor. The protein is Homeotic protein ultrabithorax (Ubx) of Drosophila funebris (Fruit fly).